The following is a 429-amino-acid chain: GTPase Obg (429 aa).

Residues 1–158 form the Obg domain; sequence MFADSAKIFI…LNVTLELKVI (158 aa). The OBG-type G domain occupies 159-333; sequence ADVGLVGFPN…LLYYVSDLLK (175 aa). GTP-binding positions include 165-172, 190-194, 212-215, 282-285, and 314-316; these read GFPNVGKS, FTTLN, DIPG, NKTD, and SAV. 2 residues coordinate Mg(2+): serine 172 and threonine 192. The 80-residue stretch at 350-429 folds into the OCT domain; that stretch reads ENLVMSEPYT…MYGLEFDYYK (80 aa).

Belongs to the TRAFAC class OBG-HflX-like GTPase superfamily. OBG GTPase family. Monomer. The cofactor is Mg(2+).

It is found in the cytoplasm. An essential GTPase which binds GTP, GDP and possibly (p)ppGpp with moderate affinity, with high nucleotide exchange rates and a fairly low GTP hydrolysis rate. Plays a role in control of the cell cycle, stress response, ribosome biogenesis and in those bacteria that undergo differentiation, in morphogenesis control. This is GTPase Obg from Lachnoclostridium phytofermentans (strain ATCC 700394 / DSM 18823 / ISDg) (Clostridium phytofermentans).